The sequence spans 762 residues: 1-phosphatidylinositol 4,5-bisphosphate phosphodiesterase delta-4 (762 aa).

In terms of domain architecture, PH spans 16-124; it reads LLMQEGMPMR…WMRGLQLLVD (109 aa). The interval 26–53 is substrate binding; that stretch reads KVRSKSWKKLRYFRLQNDGMTVWHARQA. EF-hand domains follow at residues 134 to 169, 170 to 205, and 206 to 237; these read RLDQ…MNVE, MDQE…LTKR, and AEVQ…EQKE. Ca(2+) is bound by residues aspartate 147, asparagine 149, aspartate 151, lysine 153, glutamate 158, aspartate 183, serine 185, serine 187, threonine 189, and glutamate 194. The GBA signature appears at 213–243; it reads ESFSADGQKLTLLEFLDFLREEQKERDCTSE. Residues 290-435 enclose the PI-PLC X-box domain; the sequence is QDMTQPLNHY…LRRRILVKGK (146 aa). Histidine 305 is a catalytic residue. Ca(2+) is bound by residues asparagine 306, glutamate 335, and aspartate 337. The active site involves histidine 350. Glutamate 384 contacts Ca(2+). Positions 433 and 435 each coordinate substrate. The segment covering 443–471 has biased composition (acidic residues); that stretch reads LEYEEEEAEPELEESELALESQFETEPEP. The disordered stretch occupies residues 443-483; that stretch reads LEYEEEEAEPELEESELALESQFETEPEPQEQNLQSKDKKK. Residue serine 457 is modified to Phosphoserine. A PI-PLC Y-box domain is found at 493–609; sequence LSSLVIYLKS…GYVLKPDFLR (117 aa). Substrate contacts are provided by serine 522 and arginine 549. A C2 domain is found at 609-736; sequence RDIQSSFHPE…QGYRHIHLLS (128 aa). Residues isoleucine 650, aspartate 652, asparagine 676, aspartate 705, tyrosine 706, and aspartate 707 each coordinate Ca(2+). Residues 731–734 carry the PDZ-binding motif; the sequence is HIHL.

Interacts with GRIP1. Interacts (via GBA motif) with guanine nucleotide-binding protein G(i) alpha subunit GNAI3 (inactive GDP-bound form); low-affinity interaction. Requires Ca(2+) as cofactor.

The protein localises to the membrane. Its subcellular location is the nucleus. The protein resides in the cytoplasm. It localises to the endoplasmic reticulum. It catalyses the reaction a 1,2-diacyl-sn-glycero-3-phospho-(1D-myo-inositol-4,5-bisphosphate) + H2O = 1D-myo-inositol 1,4,5-trisphosphate + a 1,2-diacyl-sn-glycerol + H(+). It carries out the reaction a 1,2-diacyl-sn-glycero-3-phospho-(1D-myo-inositol) + H2O = 1D-myo-inositol 1-phosphate + a 1,2-diacyl-sn-glycerol + H(+). Its function is as follows. Hydrolyzes the phosphatidylinositol 4,5-bisphosphate (PIP2) to generate 2 second messenger molecules diacylglycerol (DAG) and inositol 1,4,5-trisphosphate (IP3). DAG mediates the activation of protein kinase C (PKC), while IP3 releases Ca(2+) from intracellular stores. Required for acrosome reaction in sperm during fertilization, probably by acting as an important enzyme for intracellular Ca(2+) mobilization in the zona pellucida-induced acrosome reaction. May play a role in cell growth. Modulates the liver regeneration in cooperation with nuclear PKC. Overexpression up-regulates the Erk signaling pathway and proliferation. The protein is 1-phosphatidylinositol 4,5-bisphosphate phosphodiesterase delta-4 (PLCD4) of Pongo abelii (Sumatran orangutan).